A 177-amino-acid chain; its full sequence is ATP synthase subunit b, chloroplastic (177 aa).

Residues 26–44 traverse the membrane as a helical segment; that stretch reads IINLSIVLFVVIRFLGEAL.

It belongs to the ATPase B chain family. As to quaternary structure, F-type ATPases have 2 components, F(1) - the catalytic core - and F(0) - the membrane proton channel. F(1) has five subunits: alpha(3), beta(3), gamma(1), delta(1), epsilon(1). F(0) has four main subunits: a(1), b(1), b'(1) and c(10-14). The alpha and beta chains form an alternating ring which encloses part of the gamma chain. F(1) is attached to F(0) by a central stalk formed by the gamma and epsilon chains, while a peripheral stalk is formed by the delta, b and b' chains.

It is found in the plastid. The protein resides in the chloroplast thylakoid membrane. Functionally, f(1)F(0) ATP synthase produces ATP from ADP in the presence of a proton or sodium gradient. F-type ATPases consist of two structural domains, F(1) containing the extramembraneous catalytic core and F(0) containing the membrane proton channel, linked together by a central stalk and a peripheral stalk. During catalysis, ATP synthesis in the catalytic domain of F(1) is coupled via a rotary mechanism of the central stalk subunits to proton translocation. Component of the F(0) channel, it forms part of the peripheral stalk, linking F(1) to F(0). This chain is ATP synthase subunit b, chloroplastic, found in Bigelowiella natans (Pedinomonas minutissima).